The chain runs to 201 residues: dITP/XTP pyrophosphatase (201 aa).

8–13 (TTNENK) contacts substrate. Residue Asp68 is the Proton acceptor of the active site. Asp68 provides a ligand contact to Mg(2+). Residues Ser69, 155–158 (FGYD), Lys177, and 182–183 (HR) contribute to the substrate site.

This sequence belongs to the HAM1 NTPase family. In terms of assembly, homodimer. It depends on Mg(2+) as a cofactor.

The catalysed reaction is XTP + H2O = XMP + diphosphate + H(+). The enzyme catalyses dITP + H2O = dIMP + diphosphate + H(+). It catalyses the reaction ITP + H2O = IMP + diphosphate + H(+). Its function is as follows. Pyrophosphatase that catalyzes the hydrolysis of nucleoside triphosphates to their monophosphate derivatives, with a high preference for the non-canonical purine nucleotides XTP (xanthosine triphosphate), dITP (deoxyinosine triphosphate) and ITP. Seems to function as a house-cleaning enzyme that removes non-canonical purine nucleotides from the nucleotide pool, thus preventing their incorporation into DNA/RNA and avoiding chromosomal lesions. The chain is dITP/XTP pyrophosphatase from Borrelia garinii subsp. bavariensis (strain ATCC BAA-2496 / DSM 23469 / PBi) (Borreliella bavariensis).